The primary structure comprises 339 residues: Ketol-acid reductoisomerase (NADP(+)) (339 aa).

Positions 1–182 (MRVYYDRDAD…GGGRSGIIET (182 aa)) constitute a KARI N-terminal Rossmann domain. NADP(+) is bound by residues 24-27 (YGSQ), Lys48, Ser51, Thr53, and 83-86 (DELQ). His108 is a catalytic residue. Gly134 is an NADP(+) binding site. In terms of domain architecture, KARI C-terminal knotted spans 183 to 328 (NFKEECETDL…AKLRGMMPWI (146 aa)). Residues Asp191, Glu195, Glu227, and Glu231 each contribute to the Mg(2+) site. Ser252 serves as a coordination point for substrate.

Belongs to the ketol-acid reductoisomerase family. The cofactor is Mg(2+).

It carries out the reaction (2R)-2,3-dihydroxy-3-methylbutanoate + NADP(+) = (2S)-2-acetolactate + NADPH + H(+). The enzyme catalyses (2R,3R)-2,3-dihydroxy-3-methylpentanoate + NADP(+) = (S)-2-ethyl-2-hydroxy-3-oxobutanoate + NADPH + H(+). The protein operates within amino-acid biosynthesis; L-isoleucine biosynthesis; L-isoleucine from 2-oxobutanoate: step 2/4. It functions in the pathway amino-acid biosynthesis; L-valine biosynthesis; L-valine from pyruvate: step 2/4. Functionally, involved in the biosynthesis of branched-chain amino acids (BCAA). Catalyzes an alkyl-migration followed by a ketol-acid reduction of (S)-2-acetolactate (S2AL) to yield (R)-2,3-dihydroxy-isovalerate. In the isomerase reaction, S2AL is rearranged via a Mg-dependent methyl migration to produce 3-hydroxy-3-methyl-2-ketobutyrate (HMKB). In the reductase reaction, this 2-ketoacid undergoes a metal-dependent reduction by NADPH to yield (R)-2,3-dihydroxy-isovalerate. The polypeptide is Ketol-acid reductoisomerase (NADP(+)) (Sinorhizobium medicae (strain WSM419) (Ensifer medicae)).